Reading from the N-terminus, the 158-residue chain is Cyclic pyranopterin monophosphate synthase (158 aa).

Substrate contacts are provided by residues 76-78 (MCH) and 114-115 (ME). Residue aspartate 129 is part of the active site.

Belongs to the MoaC family. In terms of assembly, homohexamer; trimer of dimers.

The enzyme catalyses (8S)-3',8-cyclo-7,8-dihydroguanosine 5'-triphosphate = cyclic pyranopterin phosphate + diphosphate. It functions in the pathway cofactor biosynthesis; molybdopterin biosynthesis. In terms of biological role, catalyzes the conversion of (8S)-3',8-cyclo-7,8-dihydroguanosine 5'-triphosphate to cyclic pyranopterin monophosphate (cPMP). The chain is Cyclic pyranopterin monophosphate synthase from Clostridium perfringens (strain 13 / Type A).